The following is a 408-amino-acid chain: Glycoprotein 55 (408 aa).

Residues 1 to 32 form the signal peptide; sequence MEGPAFSKPLKDKINPWGPLIILGILIRAGVS. The Virion surface segment spans residues 33–385; it reads VQHDSPHQVF…LFNRSTWFTT (353 aa). N-linked (GlcNAc...) asparagine; by host glycans are attached at residues Asn-43 and Asn-58. The tract at residues 256–281 is disordered; sequence RPPQPPPPGAASIVPETAPPSQQPGT. N-linked (GlcNAc...) asparagine; by host glycosylation is found at Asn-297 and Asn-329. Residues 335 to 371 adopt a coiled-coil conformation; sequence KEECCFYADHTGLVRDSMAKLRERLTQRQKLFESSQG. Asn-378 is a glycosylation site (N-linked (GlcNAc...) asparagine; by host). The chain crosses the membrane as a helical span at residues 386–406; sequence LIFTIIGPLIILLLILLFWTL. The Intravirion segment spans residues 407-408; it reads HS.

It is found in the host endoplasmic reticulum membrane. The protein resides in the host cell membrane. The protein localises to the virion membrane. Functionally, envelope-like membrane glycoprotein. In Mus musculus (Mouse), this protein is Glycoprotein 55 (env).